The sequence spans 452 residues: Glycoprotein endo-alpha-1,2-mannosidase-like protein (452 aa).

Residues 1 to 8 lie on the Cytoplasmic side of the membrane; that stretch reads MARRRRRA. The helical; Signal-anchor for type II membrane protein transmembrane segment at 9 to 29 threads the bilayer; sequence CIALFLVLLFAFGTLMGLRTL. Over 30-452 the chain is Lumenal; the sequence is KAPDGLPALG…FIKEKEQWLM (423 aa). The interval 40–90 is disordered; it reads PGPELAPFERRPEGNPAPARAPAAPAAPPPPPPRTAAPRASLGPAEADPAP. Pro residues predominate over residues 64-74; sequence PAAPPPPPPRT.

It belongs to the glycosyl hydrolase 99 family.

It localises to the golgi apparatus membrane. The polypeptide is Glycoprotein endo-alpha-1,2-mannosidase-like protein (Maneal) (Mus musculus (Mouse)).